Consider the following 109-residue polypeptide: Spermidine export protein MdtI (109 aa).

The next 4 membrane-spanning stretches (helical) occupy residues 6–26 (WVHGAWLALAIILEIAANVLL), 36–56 (CYGILSLAAVLAAFSALSQAV), 64–84 (AYALWGGFGIAATLAAGWVLF), and 88–108 (LNPKGWVGVVLLLVGMIMIKL).

This sequence belongs to the drug/metabolite transporter (DMT) superfamily. Small multidrug resistance (SMR) (TC 2.A.7.1) family. MdtI subfamily. Forms a complex with MdtJ.

Its subcellular location is the cell inner membrane. Catalyzes the excretion of spermidine. In Salmonella arizonae (strain ATCC BAA-731 / CDC346-86 / RSK2980), this protein is Spermidine export protein MdtI.